Here is a 505-residue protein sequence, read N- to C-terminus: L-carnitine/gamma-butyrobetaine antiporter (505 aa).

The next 12 helical transmembrane spans lie at 10 to 30 (IEPK…WLTV), 51 to 71 (WGWA…WLVF), 92 to 112 (IFMM…SIEI), 143 to 163 (GPLP…FFFV), 195 to 215 (FYLV…TPLV), 231 to 251 (LDAI…ACGL), 263 to 283 (SYLS…SFIM), 316 to 336 (WTVF…IFLA), 347 to 367 (LCFG…TVLG), 403 to 423 (LSTA…VTLI), 446 to 466 (LLVR…LLAL), and 475 to 495 (AIIA…LSFI).

The protein belongs to the BCCT transporter (TC 2.A.15) family. CaiT subfamily. As to quaternary structure, homotrimer.

It localises to the cell inner membrane. It carries out the reaction 4-(trimethylamino)butanoate(in) + (R)-carnitine(out) = 4-(trimethylamino)butanoate(out) + (R)-carnitine(in). It functions in the pathway amine and polyamine metabolism; carnitine metabolism. In terms of biological role, catalyzes the exchange of L-carnitine for gamma-butyrobetaine. The sequence is that of L-carnitine/gamma-butyrobetaine antiporter from Salmonella choleraesuis (strain SC-B67).